A 312-amino-acid chain; its full sequence is Ribonuclease H2 subunit B (312 aa).

A2 carries the post-translational modification N-acetylalanine. A disordered region spans residues 236–256 (EPSASLPNPPSKKIKLSDEPV). K295 bears the N6-acetyllysine mark. S296 is subject to Phosphoserine.

This sequence belongs to the RNase H2 subunit B family. In terms of assembly, the RNase H2 complex is a heterotrimer composed of the catalytic subunit RNASEH2A and the non-catalytic subunits RNASEH2B and RNASEH2C. Widely expressed.

The protein resides in the nucleus. Its function is as follows. Non catalytic subunit of RNase H2, an endonuclease that specifically degrades the RNA of RNA:DNA hybrids. Participates in DNA replication, possibly by mediating the removal of lagging-strand Okazaki fragment RNA primers during DNA replication. Mediates the excision of single ribonucleotides from DNA:RNA duplexes. This is Ribonuclease H2 subunit B (RNASEH2B) from Homo sapiens (Human).